A 262-amino-acid chain; its full sequence is Small ribosomal subunit protein eS1 (262 aa).

It belongs to the eukaryotic ribosomal protein eS1 family. Component of the small ribosomal subunit. Mature ribosomes consist of a small (40S) and a large (60S) subunit. The 40S subunit contains about 33 different proteins and 1 molecule of RNA (18S). The 60S subunit contains about 49 different proteins and 3 molecules of RNA (25S, 5.8S and 5S).

The protein resides in the cytoplasm. The sequence is that of Small ribosomal subunit protein eS1 from Plasmodium vivax (strain Salvador I).